Reading from the N-terminus, the 333-residue chain is Protoheme IX farnesyltransferase (333 aa).

A run of 7 helical transmembrane segments spans residues 64-84, 110-130, 133-153, 161-181, 189-209, 246-266, and 287-307; these read LICTLGGGALAAAAAGALNCL, TVFLAAVSCTLAASMLLISGV, LAAGLTLLGLCSYVILYTVIL, IVFGGVAGAIPPLVGASAATG, WLFGLVMLWTPAHFWALAILL, IMGVFALPEGGLLYGIMLLPF, and AKSLFRWSILYMFGICLLLLI.

This sequence belongs to the UbiA prenyltransferase family. Protoheme IX farnesyltransferase subfamily.

The protein resides in the cell inner membrane. The catalysed reaction is heme b + (2E,6E)-farnesyl diphosphate + H2O = Fe(II)-heme o + diphosphate. The protein operates within porphyrin-containing compound metabolism; heme O biosynthesis; heme O from protoheme: step 1/1. Its function is as follows. Converts heme B (protoheme IX) to heme O by substitution of the vinyl group on carbon 2 of heme B porphyrin ring with a hydroxyethyl farnesyl side group. This is Protoheme IX farnesyltransferase from Prochlorococcus marinus (strain MIT 9312).